Here is a 1603-residue protein sequence, read N- to C-terminus: GATOR1 complex protein DEPDC5 (1603 aa).

Disordered regions lie at residues 427 to 450, 484 to 527, and 696 to 720; these read GKKP…KESE, VRER…SSLG, and LSNS…VSTS. Over residues 430–439 the composition is skewed to basic and acidic residues; it reads PASEKAKNGR. Over residues 494–508 the composition is skewed to low complexity; that stretch reads SASSCDVSSSPSLPS. Phosphoserine is present on Ser-505. 2 stretches are compositionally biased toward polar residues: residues 518–527 and 696–707; these read SQASDDSSLG and LSNSGAGMNPRT. Ser-1002 bears the Phosphoserine; by PIM1 mark. A compositionally biased stretch (polar residues) spans 1135–1153; the sequence is DRGNSQTFGNSQNIGEQGY. The interval 1135 to 1165 is disordered; it reads DRGNSQTFGNSQNIGEQGYSSTNSSDSSSQQ. Residues 1154–1165 show a composition bias toward low complexity; that stretch reads SSTNSSDSSSQQ. One can recognise a DEP domain in the interval 1187–1262; sequence PSTGVQLLSE…YGFYFYKIVT (76 aa). At Ser-1530 the chain carries Phosphoserine; by PKB/AKT1 and PIM1.

It belongs to the IML1 family. As to quaternary structure, within the GATOR complex, component of the GATOR1 subcomplex, made of DEPDC5, NPRL2 and NPRL3. GATOR1 mediates the strong interaction of the GATOR complex with small GTPases Rag (RagA/RRAGA, RagB/RRAGB, RagC/RRAGC and/or RagD/RRAGD) heterodimers. Interacts with SAMTOR; interaction is direct and takes place in presence of methionine, leading to inhibit the activity of the GATOR1 complex. Phosphorylation at Ser-1002 and Ser-1530 by AKT1 and PIM1 inhibit the activity of DEPDC5, releasing inhibition of the mTORC1 pathway. Post-translationally, ubiquitinated. Amino acid-induced 'Lys-48'-linked polyubiquitination of DEPDC5 by the BCR(KLHL22) ubiquitin ligase complex leads to DEPDC5 proteasomal degradation and inhibition of the GATOR1 complex. Ubiquitination may occur at multiple lysines. Expressed in developing and adult brain.

It localises to the lysosome membrane. The protein localises to the cytoplasm. It is found in the cytosol. Its subcellular location is the perinuclear region. Functionally, as a component of the GATOR1 complex functions as an inhibitor of the amino acid-sensing branch of the mTORC1 pathway. In response to amino acid depletion, the GATOR1 complex has GTPase activating protein (GAP) activity and strongly increases GTP hydrolysis by RagA/RRAGA (or RagB/RRAGB) within heterodimeric Rag complexes, thereby turning them into their inactive GDP-bound form, releasing mTORC1 from lysosomal surface and inhibiting mTORC1 signaling. In the presence of abundant amino acids, the GATOR1 complex is negatively regulated by GATOR2, the other GATOR subcomplex, in this amino acid-sensing branch of the TORC1 pathway. Within the GATOR1 complex, DEPDC5 mediates direct interaction with the nucleotide-binding pocket of small GTPases Rag (RagA/RRAGA, RagB/RRAGB, RagC/RRAGC and/or RagD/RRAGD) and coordinates their nucleotide loading states by promoting RagA/RRAGA or RagB/RRAGB into their GDP-binding state and RagC/RRAGC or RagD/RRAGD into their GTP-binding state. However, it does not execute the GAP activity, which is mediated by NPRL2. The chain is GATOR1 complex protein DEPDC5 from Homo sapiens (Human).